Here is an 867-residue protein sequence, read N- to C-terminus: G-protein coupled receptor family C group 6 member A (867 aa).

The first 19 residues, 1–19 (MDLMSFILLWAGLMKVAEA), serve as a signal peptide directing secretion. Residues 20–566 (SIAQFSQLGA…EYFDWNSGFA (547 aa)) lie on the Extracellular side of the membrane. N-linked (GlcNAc...) asparagine glycosylation is found at Asn-51, Asn-55, Asn-97, Asn-296, Asn-308, Asn-336, Asn-356, Asn-370, Asn-527, and Asn-547. A helical transmembrane segment spans residues 567 to 587 (IVLLILAALGVLLLFFMSALF). Residues 588–602 (FWQRHSPVVKAAGGP) are Cytoplasmic-facing. A helical membrane pass occupies residues 603–623 (LCHLILVSLLGSFISVVFFVG). Residues 624–634 (EPSDLTCRARQ) lie on the Extracellular side of the membrane. A helical transmembrane segment spans residues 635 to 655 (VIFGFSFTLCVSCILVKSLKI). Residues 656 to 675 (LLAFEMNFELKELLCMLYKP) lie on the Cytoplasmic side of the membrane. A helical membrane pass occupies residues 676–696 (YMIVSVGMGVQIIICTVWLTL). The Extracellular portion of the chain corresponds to 697 to 716 (YKPFKDKEVQTESILLECNE). The helical transmembrane segment at 717-737 (GFYVMFWLMLGYIALLALFCF) threads the bilayer. The Cytoplasmic segment spans residues 738–754 (TFAYIGRKLPQKYNEAK). Residues 755 to 775 (FITFSMVICLMAWIIFIPIHV) form a helical membrane-spanning segment. Residues 776 to 781 (TTSGKY) are Extracellular-facing. Residues 782 to 802 (VPAVEMVVILISNYGILSCHF) form a helical membrane-spanning segment. Topologically, residues 803–867 (LPKSYIILFK…LSFVPEEKHE (65 aa)) are cytoplasmic.

This sequence belongs to the G-protein coupled receptor 3 family. Homodimer; disulfide-linked.

Its subcellular location is the cell membrane. In terms of biological role, olfactory receptor that is activated by amino acids that act as potent odorants in fish. Displays preference for acidic amino acids such as Glu over basic amino acids. This chain is G-protein coupled receptor family C group 6 member A (gprc6a), found in Danio rerio (Zebrafish).